A 149-amino-acid polypeptide reads, in one-letter code: MKVIFLKDVKGKGKKGEIKNVADGYANNFLFKQGLAIEATPANLKALEAQKQKEQRQAAEELANAKKLKEQLEKLTVTIPAKAGEGGRLFGSITSKQIAESLQAQHGLKLDKRKIELADAIRALGYTNVPVKLHPEVTATLKVHVTEQK.

It belongs to the bacterial ribosomal protein bL9 family.

In terms of biological role, binds to the 23S rRNA. The polypeptide is Large ribosomal subunit protein bL9 (rplI) (Geobacillus stearothermophilus (Bacillus stearothermophilus)).